We begin with the raw amino-acid sequence, 283 residues long: Bifunctional protein FolD (283 aa).

NADP(+) is bound by residues Gly165 to Ser167, Ser190, and Ile231.

It belongs to the tetrahydrofolate dehydrogenase/cyclohydrolase family. Homodimer.

The enzyme catalyses (6R)-5,10-methylene-5,6,7,8-tetrahydrofolate + NADP(+) = (6R)-5,10-methenyltetrahydrofolate + NADPH. It catalyses the reaction (6R)-5,10-methenyltetrahydrofolate + H2O = (6R)-10-formyltetrahydrofolate + H(+). The protein operates within one-carbon metabolism; tetrahydrofolate interconversion. Its function is as follows. Catalyzes the oxidation of 5,10-methylenetetrahydrofolate to 5,10-methenyltetrahydrofolate and then the hydrolysis of 5,10-methenyltetrahydrofolate to 10-formyltetrahydrofolate. The polypeptide is Bifunctional protein FolD (Janthinobacterium sp. (strain Marseille) (Minibacterium massiliensis)).